The sequence spans 123 residues: Large ribosomal subunit protein uL29 (123 aa).

Belongs to the universal ribosomal protein uL29 family. In terms of assembly, component of the large ribosomal subunit.

The protein localises to the cytoplasm. In terms of biological role, component of the large ribosomal subunit. The ribosome is a large ribonucleoprotein complex responsible for the synthesis of proteins in the cell. The protein is Large ribosomal subunit protein uL29 (rpl35) of Hippocampus comes (Tiger tail seahorse).